Consider the following 227-residue polypeptide: MKVSYHGHSVVKIETNGKVILIDPFLTGNPKTDLKAEDVNVDAILLSHGHGDHVGDTVELAKKNNAVVVAPFELATFLSWQGVNTHPMHIGGSHEFDFGKVKFTQAFHGSSYIDEENKTITYTGMPAGILFTAEEKTLYHAGDTALFSDMKLIGELNNIDVAFLPIGDNFTMGPEDAVLAAKWVQAKTVVPMHYNTFPVIEQDPYQFVEKLQNCTGKVLEAGESITL.

It belongs to the UPF0173 family.

This is UPF0173 metal-dependent hydrolase BCE33L4354 from Bacillus cereus (strain ZK / E33L).